We begin with the raw amino-acid sequence, 1343 residues long: Vascular endothelial growth factor receptor 2 (1343 aa).

The N-terminal stretch at 1-19 is a signal peptide; sequence MESRALLAVALWFCVETRA. At 20–760 the chain is on the extracellular side; sequence ASVGLPGDSL…EGVQEKTNLE (741 aa). N-linked (GlcNAc...) asparagine glycans are attached at residues Asn46, Asn96, Asn143, Asn158, and Asn245. Ig-like C2-type domains follow at residues 46–109, 141–207, 224–320, 328–414, 421–540, 547–654, and 663–749; these read NTTL…RDTD, NKNK…INDE, YDVV…KNKT, PFIA…HMVS, PQIG…RVIS, PEIT…LVKQ, and PMIT…TLFI. Cys53 and Cys103 form a disulfide bridge. A disulfide bridge connects residues Cys150 and Cys200. Cys246 and Cys307 are joined by a disulfide. 11 N-linked (GlcNAc...) asparagine glycosylation sites follow: Asn318, Asn374, Asn395, Asn507, Asn576, Asn609, Asn615, Asn627, Asn671, Asn700, and Asn717. Intrachain disulfides connect Cys445–Cys526 and Cys567–Cys638. A disulfide bond links Cys684 and Cys733. Residues 761–781 form a helical membrane-spanning segment; sequence VIILVGTAVIAMFFWLLLVIL. The Cytoplasmic portion of the chain corresponds to 782–1343; sequence VRTVKRANEG…SGTTLRSSPV (562 aa). Residue Tyr797 is modified to Phosphotyrosine. The region spanning 830 to 1158 is the Protein kinase domain; sequence LKLGKPLGRG…FSELVEHLGN (329 aa). Residues 836 to 844 and Lys864 each bind ATP; that span reads LGRGAFGQV. Tyr947 carries the phosphotyrosine; by autocatalysis modification. Phosphoserine is present on residues Ser978 and Ser980. Tyr992 is subject to Phosphotyrosine; by autocatalysis. Cys1020 and Cys1041 form a disulfide bridge. Residue Asp1024 is the Proton acceptor of the active site. Phosphotyrosine; by autocatalysis occurs at positions 1050, 1055, 1171, and 1210. A phosphoserine mark is found at Ser1227 and Ser1231. A Phosphothreonine modification is found at Thr1234. The interval 1267–1314 is disordered; the sequence is TLEDRNKLSPSFGGMMPSKSRESVASEGSNQTSGYQSGYHSDDTDTTV. The segment covering 1292–1305 has biased composition (polar residues); sequence SEGSNQTSGYQSGY. Tyr1301, Tyr1305, and Tyr1315 each carry phosphotyrosine; by autocatalysis.

This sequence belongs to the protein kinase superfamily. Tyr protein kinase family. CSF-1/PDGF receptor subfamily. As to quaternary structure, homodimer in the presence of bound dimeric VEGFA, VEGFC or VEGFD ligands; monomeric in the absence of bound ligands. Can also form heterodimers with FLT1/VEGFR1 and KDR/VEGFR2. Interacts (tyrosine phosphorylated) with LFYN, NCK1, PLCG1. Interacts (tyrosine-phosphorylated active form preferentially) with DAB2IP (via C2 domain and active form preferentially); the interaction occurs at the late phase of VEGFA response and inhibits KDR/VEGFR2 activity. Interacts with SHBSH2D2A/TSAD, GRB2, MYOF, CBL and PDCD6. Interacts (via C-terminus domain) with ERN1 (via kinase domain); the interaction is facilitated in a XBP1- and vascular endothelial growth factor (VEGF)-dependent manner in endothelial cells. Interacts (via juxtamembrane region) with chaperone PDCL3 (via thioredoxin fold region); the interaction leads to increased KDR/VEGFR2 abundance through inhibition of its ubiquitination and degradation. Interacts (tyrosine phosphorylated) with CCDC88A/GIV (via SH2-like region); binding requires autophosphorylation of the KDR/VEGFR2 C-terminal region. Interacts with isoform 2 of BSG. Interacts with SLC31A1; this interaction is induced upon VEGFA stimulation leading to SLC31A1 and KDR subsequent co-internalization to early endosomes, thereby activating KDR downstream signaling in endothelial cells. N-glycosylated. In terms of processing, ubiquitinated. Tyrosine phosphorylation of the receptor promotes its poly-ubiquitination, leading to its degradation via the proteasome or lysosomal proteases. Post-translationally, autophosphorylated on tyrosine residues upon ligand binding. Autophosphorylation occurs in trans, i.e. one subunit of the dimeric receptor phosphorylates tyrosine residues on the other subunit. Phosphorylation at Tyr-947 is important for interaction with SH2D2A/TSAD and VEGFA-mediated reorganization of the actin cytoskeleton. Phosphorylation at Tyr-1171 is important for interaction with PLCG1 and SHB. Phosphorylation at Tyr-1210 is important for interaction with NCK1 and FYN. Dephosphorylated by PTPRB. Dephosphorylated by PTPRJ at Tyr-797, Tyr-947, Tyr-992, Tyr-1050, Tyr-1055, Tyr-1171 and Tyr-1210. The inhibitory disulfide bond between Cys-1020 and Cys-1041 may serve as a specific molecular switch for H(2)S-induced modification that regulates KDR/VEGFR2 function. In terms of tissue distribution, expressed in the post-pubertal mammary glands.

Its subcellular location is the cell membrane. It localises to the cytoplasm. The protein localises to the nucleus. The protein resides in the cytoplasmic vesicle. It is found in the early endosome. Its subcellular location is the cell junction. It localises to the endoplasmic reticulum. The catalysed reaction is L-tyrosyl-[protein] + ATP = O-phospho-L-tyrosyl-[protein] + ADP + H(+). Its activity is regulated as follows. Present in an inactive conformation in the absence of bound ligand. Binding of VEGFA, VEGFC or VEGFD leads to dimerization and activation by autophosphorylation on tyrosine residues. May be regulated by hydrogen sulfide (H(2)S) levels via a sensitive intracellular disulfide bond. In terms of biological role, tyrosine-protein kinase that acts as a cell-surface receptor for VEGFA, VEGFC and VEGFD. Plays an essential role in the regulation of angiogenesis, vascular development, vascular permeability, and embryonic hematopoiesis. Promotes proliferation, survival, migration and differentiation of endothelial cells. Promotes reorganization of the actin cytoskeleton. Isoforms lacking a transmembrane domain may function as decoy receptors for VEGFA, VEGFC and/or VEGFD. Modulates FLT1 and FLT4 signaling by forming heterodimers. Binding of vascular growth factors to isoform 1 leads to the activation of several signaling cascades. Activation of PLCG1 leads to the production of the cellular signaling molecules diacylglycerol and inositol-1,4,5-trisphosphate and the activation of protein kinase C. Mediates activation of MAPK1/ERK2, MAPK3/ERK1 and the MAP kinase signaling pathway, as well as of the AKT1 signaling pathway. Mediates phosphorylation of PIK3R1, the regulatory subunit of phosphatidylinositol 3-kinase, reorganization of the actin cytoskeleton and activation of PTK2/FAK1. Required for VEGFA-mediated induction of NOS2 and NOS3, leading to the production of the signaling molecule nitric oxide (NO) by endothelial cells. Phosphorylates PLCG1. Promotes phosphorylation of FYN, NCK1, NOS3, PIK3R1, PTK2/FAK1 and SRC. In Rattus norvegicus (Rat), this protein is Vascular endothelial growth factor receptor 2.